The chain runs to 538 residues: DALR anticodon-binding domain-containing protein 3 (538 aa).

As to quaternary structure, part of a complex containing tRNA(Arg) and METTL2. Interacts with tRNA(Arg)(CCU) and tRNA(Arg)(UCU). Interacts with METTL2.

In terms of biological role, involved in tRNA methylation. Facilitates the recognition and targeting of tRNA(Arg)(CCU) and tRNA(Arg)(UCU) substrates for N(3)-methylcytidine modification by METTL2. The polypeptide is DALR anticodon-binding domain-containing protein 3 (Dalrd3) (Rattus norvegicus (Rat)).